A 6306-amino-acid chain; its full sequence is Adhesion G-protein coupled receptor V1 (6306 aa).

An N-terminal signal peptide occupies residues M1–G29. Calx-beta domains are found at residues E30 to T117, V133 to K237, P262 to L362, K388 to L488, P645 to L745, D763 to S861, V876 to L979, A993 to L1093, T1108 to V1208, A1444 to K1544, T1564 to L1665, T1710 to L1809, I1850 to L1952, T1966 to L2079, Q2107 to M2206, V2222 to T2324, T2441 to S2541, N2584 to V2676, D2689 to L2789, L2814 to T2925, T2947 to T3048, and L3063 to F3172. Residues E30–A5908 lie on the Extracellular side of the membrane. 6 EAR repeats span residues V3255–G3296, I3297–S3345, K3348–G3393, S3395–G3439, G3441–M3488, and S3492–S3534. 13 Calx-beta domains span residues D3525 to L3625, S3639 to L3739, G3775 to T3875, A3899 to I4006, V4020 to I4123, I4139 to L4239, A4255 to T4354, R4387 to T4489, S4512 to L4612, E4634 to L4734, S4992 to T5095, A5288 to L5332, and I5368 to L5468. Residues S5747–S5903 form the GAIN-B domain. 2 cysteine pairs are disulfide-bonded: C5856–C5885 and C5873–C5887. A GPS region spans residues C5856–S5903. The chain crosses the membrane as a helical span at residues F5909–F5929. Over C5930–K5939 the chain is Cytoplasmic. A helical membrane pass occupies residues L5940–Y5960. Topologically, residues A5961–Y5979 are extracellular. A helical transmembrane segment spans residues L5980 to V6000. Topologically, residues M6001 to Y6010 are cytoplasmic. A helical membrane pass occupies residues L6011–I6031. Topologically, residues L6032–A6059 are extracellular. The chain crosses the membrane as a helical span at residues A6060–I6080. Residues H6081–E6104 are Cytoplasmic-facing. Residues I6105–H6125 traverse the membrane as a helical segment. Residues M6126–M6133 lie on the Extracellular side of the membrane. The chain crosses the membrane as a helical span at residues L6134–I6154. At L6155–L6306 the chain is on the cytoplasmic side. The tract at residues A6216–S6248 is disordered. Positions S6217 to S6240 are enriched in polar residues.

This sequence belongs to the G-protein coupled receptor 2 family. Adhesion G-protein coupled receptor (ADGR) subfamily. Forms a heterodimer, consisting of a large extracellular region (alpha subunit) non-covalently linked to a seven-transmembrane moiety (beta subunit). Component of USH2 complex, composed of ADGRV1, PDZD7, USH2A and WHRN. Interacts with USH2A and WHRN. Interacts (via the cytoplasmic region) with PDZD7. Interacts (via the cytoplasmic region) with MYO7A (via MyTH4-FERM domains). In terms of processing, autoproteolytically cleaved into 2 subunits, an extracellular alpha subunit and a seven-transmembrane subunit. As to expression, expressed at low levels in adult tissues.

The protein localises to the cell membrane. It localises to the cell projection. The protein resides in the stereocilium membrane. It is found in the photoreceptor inner segment. In terms of biological role, G-protein coupled receptor which has an essential role in the development of hearing and vision. Couples to G-alpha(i)-proteins, GNAI1/2/3, G-alpha(q)-proteins, GNAQ, as well as G-alpha(s)-proteins, GNAS, inhibiting adenylate cyclase (AC) activity and cAMP production. Required for the hair bundle ankle formation, which connects growing stereocilia in developing cochlear hair cells of the inner ear. In response to extracellular calcium, activates kinases PKA and PKC to regulate myelination by inhibiting the ubiquitination of MAG, thus enhancing the stability of this protein in myelin-forming cells of the auditory pathway. In retina photoreceptors, the USH2 complex is required for the maintenance of periciliary membrane complex that seems to play a role in regulating intracellular protein transport. Involved in the regulation of bone metabolism. Functionally, cleaved ADGRV1 beta-subunit couples with G-alpha(i)-proteins, GNAI1/2/3, and constitutively inhibits adenylate cyclase (AC) activity with a stronger effect than full ADGRV1. This Homo sapiens (Human) protein is Adhesion G-protein coupled receptor V1.